Here is a 295-residue protein sequence, read N- to C-terminus: Bifunctional protein FolD (295 aa).

Residues 165–167 (GRG), Ser192, and Ile233 contribute to the NADP(+) site.

The protein belongs to the tetrahydrofolate dehydrogenase/cyclohydrolase family. In terms of assembly, homodimer.

The catalysed reaction is (6R)-5,10-methylene-5,6,7,8-tetrahydrofolate + NADP(+) = (6R)-5,10-methenyltetrahydrofolate + NADPH. It catalyses the reaction (6R)-5,10-methenyltetrahydrofolate + H2O = (6R)-10-formyltetrahydrofolate + H(+). It participates in one-carbon metabolism; tetrahydrofolate interconversion. Catalyzes the oxidation of 5,10-methylenetetrahydrofolate to 5,10-methenyltetrahydrofolate and then the hydrolysis of 5,10-methenyltetrahydrofolate to 10-formyltetrahydrofolate. This chain is Bifunctional protein FolD, found in Tropheryma whipplei (strain Twist) (Whipple's bacillus).